A 236-amino-acid chain; its full sequence is Probable transmembrane ascorbate ferrireductase 4 (236 aa).

The 197-residue stretch at 14-210 folds into the Cytochrome b561 domain; it reads FARLSGLVVA…LGCIVITAAI (197 aa). 3 helical membrane-spanning segments follow: residues 17–37, 42–62, and 76–96; these read LSGL…PNLG, TLHP…AILI, and VHLW…WTKF. Heme b contacts are provided by H44, H77, and H110. Transmembrane regions (helical) follow at residues 112–132, 144–164, and 191–211; these read WMGL…FMSF, TFLP…IATA, and VNGL…AAIL. H149 serves as a coordination point for heme b.

As to quaternary structure, homodimer. Requires heme b as cofactor.

The protein localises to the membrane. It catalyses the reaction Fe(3+)(out) + L-ascorbate(in) = monodehydro-L-ascorbate radical(in) + Fe(2+)(out) + H(+). Functionally, two-heme-containing cytochrome. May catalyze ascorbate-dependent trans-membrane ferric-chelate reduction. The chain is Probable transmembrane ascorbate ferrireductase 4 (CYB561D) from Arabidopsis thaliana (Mouse-ear cress).